The primary structure comprises 264 residues: Short-chain dehydrogenase/reductase malC (264 aa).

The chain crosses the membrane as a helical span at residues 13–35 (GKNVLIIGGTSGIGFAVAQLVIE). 11 residues coordinate NADP(+): Thr22, Ser23, Ile25, Ser45, Asn46, Lys49, Asp75, Asn88, Arg130, Val202, and Thr204. N-linked (GlcNAc...) asparagine glycosylation occurs at Asn249.

It belongs to the short-chain dehydrogenases/reductases (SDR) family.

Its subcellular location is the membrane. The catalysed reaction is 1-hydroxy-3-{[2-(1,1-dimethylallyl)-indol-3-yl]methyl}-6H,7H,8H-5lambda(5)-pyrrolo[1,2-a]pyrazine + NADPH + H(+) = 1-hydroxy-3-{[2-(1,1-dimethylallyl)-indol-3-yl]methyl}-4H,6H,7H,8H-pyrrolo[1,2-a]pyrazine + NADP(+). It catalyses the reaction 1-hydroxy-3-{[2-(1,1-dimethylallyl)-indol-3-yl]methyl}-4H,6H,7H,8H-pyrrolo[1,2-a]pyrazine = (+)-premalbrancheamide. The protein operates within alkaloid biosynthesis. Functionally, short-chain dehydrogenase/reductase; part of the gene cluster that mediates the biosynthesis of malbrancheamide, a dichlorinated fungal indole alkaloid that belongs to a family of natural products containing a characteristic bicyclo[2.2.2]diazaoctane core. The first step of malbrancheamide biosynthesis involves coupling of L-proline and L-tryptophan by malG, a bimodular NRPS, to produce L-Pro-L-Trp aldehyde through reductive offloading. This compound undergoes spontaneous cyclization and dehydration to give a dienamine which is reverse prenylated at C-2 by malE. The other prenyltransferase present in the cluster, malB, displays modest activity, suggesting that may be a redundant gene in the pathway. Subsequently, a [4+2] Diels-Alder cyclo-addition catalyzed by the bifunctional enzyme malC forms the characteristic bicyclo[2.2.2]diazaoctane ring of premalbrancheamid. The first reaction catalyzed is a NADPH-dependent reduction reaction in which the nicotinamide cofactor is a stoichiometric reagent. Either NADH or NADPH is effective as a cofactor. NADP(+) is required for stereocontrolled formation of premalbrancheamide, however it does not appear to be required as a formal stoichiometric reagent because the second reaction performed by malC, the [4+2] cycloaddition, is a balanced chemical reaction without requirement for hydride transfer to balance the reaction. Finally, the flavin-dependent halogenase malA catalyzes the iterative dichlorination of the indole ring of premalbrancheamide to yield C-9 monochlorinated malbrancheamide B, C-8 monochlorinated isomalbrancheamide B, and dichlorinated malbrancheamide. MalA is also able to brominate premalbrancheamide at C-9 to yield malbrancheamide C, and, to a lesser extend, at C-8 to yield isomalbrancheamide C. Finally, malA can brominate C-9 monochlorinated malbrancheamide B at C-8 to yield malbrancheamide D, or C-8 monochlorinated isomalbrancheamide B at C-9 to produce isomalbrancheamide D. The sequence is that of Short-chain dehydrogenase/reductase malC from Malbranchea aurantiaca.